The chain runs to 227 residues: Chaperone protein FocC (227 aa).

Residues 1–21 form the signal peptide; it reads MRIWAVLASFLVFFYIPQSYA.

The protein belongs to the periplasmic pilus chaperone family.

It is found in the periplasm. Functionally, involved in the biogenesis of the F1C fimbriae. This chain is Chaperone protein FocC (focC), found in Escherichia coli O6:H1 (strain CFT073 / ATCC 700928 / UPEC).